The sequence spans 385 residues: 2-oxoglutarate-dependent dioxygenase AFUA_1G01000 (385 aa).

Residues 203 to 327 (PSDDFLRLLR…RYSVLVGTRP (125 aa)) enclose the Fe2OG dioxygenase domain. Residues His-230, Asp-232, and His-304 each contribute to the Fe cation site. Arg-318 is a 2-oxoglutarate binding site.

It belongs to the iron/ascorbate-dependent oxidoreductase family. The cofactor is Fe(2+).

In terms of biological role, 2-oxoglutarate-dependent dioxygenase; part of the gene cluster that mediates the biosynthesis of fumigermin that inhibits germination of spores of the inducing S.rapamycinicus, and thus helps the fungus to defend resources in the shared habitat against a bacterial competitor. The partially reducing polyketide synthase fngA alone is sufficient for the production of fumigermin. FgnA catalyzes the condensation of 3 malonyl-CoA units to an acetyl-CoA starter, and 3 methylations to yield fumigermin. It is remarkable that the five cluster genes including fgnA are conserved in distantly related fungi, supporting the assumption of a fumigermin cluster; it is thus possible that originally all five genes were functional, but that the genes encoding tailoring enzymes became inactive from mutations, similar to the case of the fgnA gene in strains A1163 and Af293. In Aspergillus fumigatus (strain ATCC MYA-4609 / CBS 101355 / FGSC A1100 / Af293) (Neosartorya fumigata), this protein is 2-oxoglutarate-dependent dioxygenase AFUA_1G01000.